The following is a 132-amino-acid chain: Small ribosomal subunit protein uS11 (132 aa).

The protein belongs to the universal ribosomal protein uS11 family. In terms of assembly, part of the 30S ribosomal subunit. Interacts with proteins S7 and S18. Binds to IF-3.

Located on the platform of the 30S subunit, it bridges several disparate RNA helices of the 16S rRNA. Forms part of the Shine-Dalgarno cleft in the 70S ribosome. The chain is Small ribosomal subunit protein uS11 from Alkaliphilus metalliredigens (strain QYMF).